A 103-amino-acid polypeptide reads, in one-letter code: Large ribosomal subunit protein bL21 (103 aa).

Belongs to the bacterial ribosomal protein bL21 family. Part of the 50S ribosomal subunit. Contacts protein L20.

In terms of biological role, this protein binds to 23S rRNA in the presence of protein L20. This Photobacterium profundum (strain SS9) protein is Large ribosomal subunit protein bL21.